The primary structure comprises 111 residues: Large ribosomal subunit protein uL22 (111 aa).

This sequence belongs to the universal ribosomal protein uL22 family. In terms of assembly, part of the 50S ribosomal subunit.

In terms of biological role, this protein binds specifically to 23S rRNA; its binding is stimulated by other ribosomal proteins, e.g. L4, L17, and L20. It is important during the early stages of 50S assembly. It makes multiple contacts with different domains of the 23S rRNA in the assembled 50S subunit and ribosome. Functionally, the globular domain of the protein is located near the polypeptide exit tunnel on the outside of the subunit, while an extended beta-hairpin is found that lines the wall of the exit tunnel in the center of the 70S ribosome. The polypeptide is Large ribosomal subunit protein uL22 (Xylella fastidiosa (strain M23)).